The chain runs to 663 residues: UvrABC system protein B (663 aa).

The Helicase ATP-binding domain maps to 26-414 (DGLESGLAKQ…DNVAEQVVRP (389 aa)). 39 to 46 (GVTGSGKT) contacts ATP. Positions 92–115 (YYDYYQPEAYVPASDTFIEKDASI) match the Beta-hairpin motif. Positions 430-596 (QVDDLMSEIR…GINKSVEDIL (167 aa)) constitute a Helicase C-terminal domain. Positions 624–659 (AKQINALEKQMYAHAQNMEFELAAKIRDEYLLLKEQ) constitute a UVR domain.

This sequence belongs to the UvrB family. As to quaternary structure, forms a heterotetramer with UvrA during the search for lesions. Interacts with UvrC in an incision complex.

It is found in the cytoplasm. In terms of biological role, the UvrABC repair system catalyzes the recognition and processing of DNA lesions. A damage recognition complex composed of 2 UvrA and 2 UvrB subunits scans DNA for abnormalities. Upon binding of the UvrA(2)B(2) complex to a putative damaged site, the DNA wraps around one UvrB monomer. DNA wrap is dependent on ATP binding by UvrB and probably causes local melting of the DNA helix, facilitating insertion of UvrB beta-hairpin between the DNA strands. Then UvrB probes one DNA strand for the presence of a lesion. If a lesion is found the UvrA subunits dissociate and the UvrB-DNA preincision complex is formed. This complex is subsequently bound by UvrC and the second UvrB is released. If no lesion is found, the DNA wraps around the other UvrB subunit that will check the other stand for damage. The protein is UvrABC system protein B of Legionella pneumophila (strain Lens).